The chain runs to 80 residues: Protein pegasus (80 aa).

A signal peptide spans 1 to 22 (MKLSAVLLAIALLALSLVQCLG). Residues 24–80 (PDPSTKCVMECDTQEYRSICAADDKGSTKTYRNLCVMKTENCLQNANFQKISDKECP) enclose the Kazal-like domain. Disulfide bonds link C30-C65, C34-C58, and C43-C79.

As to quaternary structure, interacts with wg; the interaction facilitates short-range diffusion of wg. Strongly expressed in the developing fly wing but is excluded from the presumptive wing margin.

The protein localises to the secreted. In terms of biological role, increases short-range diffusion of the wingless/wg protein, enhancing its signaling and expression of target genes required for wing margin morphogenesis. May act as a serine protease inhibitor since it possess the Kazal serine protease inhibitor signature. In Drosophila melanogaster (Fruit fly), this protein is Protein pegasus.